Consider the following 562-residue polypeptide: MTRTMVVTVRFCTFLINVDDEWDANPWLPEQVSLDPRPPLKHRPKLNFDMSAFSSRGMRLARTLQRRYTRRPLPTYQQPTPFTFRILPAEDREWCSISTMAIAENYEDVLKGKYPAKEHARKVAKWIIEKGGDKNGTIYLEAQKQKLNEDNDGEAPFRQRRYFFYLSGCELPDSYLTYEIPNDRLTLFIPPVEPEEVIWSGLPMSVDEAKAKYDIDDCKTTRDINAHLTSTSESAQSTIYAIPEQVSDNITFLSYKDKEFKQLKPAIEYCRVTKTDYEIALIRKANEISTAAHIAVMKAASKAKNECELEAVFLKSCVERNAKNQAYHSIVAAGENGATLHYVNNAAPISEQNLLLLDAGCEVDCYASDITRTFPIKGHFNEESLAIYKIVLDMQHQCINALKAGVLWDSIHELAHKIAIKGLLDLGILKGDADAIFKARASVAFFPHGLGHYLGMDTHDTGGNANYADKDVMFRYLRVRGTLPERSVITVEPGIYFCRFIIEPYLKDEEKKQFFDEKVLEKYWSVGGVRIEDNILITKEGIENLTPTPKEVDEITALVQSA.

4 residues coordinate Mn(2+): Asp358, Asp369, Glu492, and Glu532.

The protein belongs to the peptidase M24B family. The cofactor is Mn(2+).

It catalyses the reaction Release of any N-terminal amino acid, including proline, that is linked to proline, even from a dipeptide or tripeptide.. Catalyzes the removal of a penultimate prolyl residue from the N-termini of peptides. This Leptosphaeria maculans (strain JN3 / isolate v23.1.3 / race Av1-4-5-6-7-8) (Blackleg fungus) protein is Probable Xaa-Pro aminopeptidase PEPP (PEPP).